Here is a 285-residue protein sequence, read N- to C-terminus: NAD kinase (285 aa).

D64 serves as the catalytic Proton acceptor. Residues 64–65 (DG), 140–141 (ND), R151, R168, D170, and 181–186 (TGYNLS) each bind NAD(+).

It belongs to the NAD kinase family. A divalent metal cation serves as cofactor.

The protein resides in the cytoplasm. It catalyses the reaction NAD(+) + ATP = ADP + NADP(+) + H(+). Involved in the regulation of the intracellular balance of NAD and NADP, and is a key enzyme in the biosynthesis of NADP. Catalyzes specifically the phosphorylation on 2'-hydroxyl of the adenosine moiety of NAD to yield NADP. The protein is NAD kinase of Lachnoclostridium phytofermentans (strain ATCC 700394 / DSM 18823 / ISDg) (Clostridium phytofermentans).